The primary structure comprises 164 residues: Phosphopantetheine adenylyltransferase (164 aa).

Serine 9 provides a ligand contact to substrate. Residues 9-10 (SF) and histidine 17 each bind ATP. Positions 41, 78, and 92 each coordinate substrate. Residues 93–95 (GLR), glutamate 103, and 128–134 (VRTITAT) contribute to the ATP site.

Belongs to the bacterial CoaD family. As to quaternary structure, homohexamer. The cofactor is Mg(2+).

It localises to the cytoplasm. The catalysed reaction is (R)-4'-phosphopantetheine + ATP + H(+) = 3'-dephospho-CoA + diphosphate. It functions in the pathway cofactor biosynthesis; coenzyme A biosynthesis; CoA from (R)-pantothenate: step 4/5. Its function is as follows. Reversibly transfers an adenylyl group from ATP to 4'-phosphopantetheine, yielding dephospho-CoA (dPCoA) and pyrophosphate. The chain is Phosphopantetheine adenylyltransferase from Brucella anthropi (strain ATCC 49188 / DSM 6882 / CCUG 24695 / JCM 21032 / LMG 3331 / NBRC 15819 / NCTC 12168 / Alc 37) (Ochrobactrum anthropi).